The sequence spans 204 residues: Urease accessory protein UreG (204 aa).

12–19 (GPVGSGKT) contributes to the GTP binding site.

Belongs to the SIMIBI class G3E GTPase family. UreG subfamily. Homodimer. UreD, UreF and UreG form a complex that acts as a GTP-hydrolysis-dependent molecular chaperone, activating the urease apoprotein by helping to assemble the nickel containing metallocenter of UreC. The UreE protein probably delivers the nickel.

The protein resides in the cytoplasm. Facilitates the functional incorporation of the urease nickel metallocenter. This process requires GTP hydrolysis, probably effectuated by UreG. This chain is Urease accessory protein UreG, found in Pseudomonas fluorescens (strain SBW25).